Consider the following 305-residue polypeptide: N-acetylmuramic acid 6-phosphate etherase (305 aa).

In terms of domain architecture, SIS spans 54 to 217 (AVPQLERGGR…SSALMVRLGK (164 aa)). E82 serves as the catalytic Proton donor. The active site involves E113.

The protein belongs to the GCKR-like family. MurNAc-6-P etherase subfamily. Homodimer.

The catalysed reaction is N-acetyl-D-muramate 6-phosphate + H2O = N-acetyl-D-glucosamine 6-phosphate + (R)-lactate. The protein operates within amino-sugar metabolism; N-acetylmuramate degradation. Its function is as follows. Specifically catalyzes the cleavage of the D-lactyl ether substituent of MurNAc 6-phosphate, producing GlcNAc 6-phosphate and D-lactate. This Deinococcus radiodurans (strain ATCC 13939 / DSM 20539 / JCM 16871 / CCUG 27074 / LMG 4051 / NBRC 15346 / NCIMB 9279 / VKM B-1422 / R1) protein is N-acetylmuramic acid 6-phosphate etherase.